The following is a 91-amino-acid chain: PqqA binding protein 1 (91 aa).

This sequence belongs to the PqqD family. In terms of assembly, monomer. Interacts with PqqE.

It participates in cofactor biosynthesis; pyrroloquinoline quinone biosynthesis. Functionally, functions as a PqqA binding protein and presents PqqA to PqqE, in the pyrroloquinoline quinone (PQQ) biosynthetic pathway. The polypeptide is PqqA binding protein 1 (pqqD1) (Pseudomonas putida (strain ATCC 47054 / DSM 6125 / CFBP 8728 / NCIMB 11950 / KT2440)).